A 205-amino-acid polypeptide reads, in one-letter code: Large ribosomal subunit protein uL3 (205 aa).

This sequence belongs to the universal ribosomal protein uL3 family. In terms of assembly, part of the 50S ribosomal subunit. Forms a cluster with proteins L14 and L19.

One of the primary rRNA binding proteins, it binds directly near the 3'-end of the 23S rRNA, where it nucleates assembly of the 50S subunit. This is Large ribosomal subunit protein uL3 from Flavobacterium johnsoniae (strain ATCC 17061 / DSM 2064 / JCM 8514 / BCRC 14874 / CCUG 350202 / NBRC 14942 / NCIMB 11054 / UW101) (Cytophaga johnsonae).